The sequence spans 945 residues: Probable inorganic carbon transporter subunit DabA (945 aa).

Cysteine 408, aspartate 410, histidine 651, and cysteine 666 together coordinate Zn(2+).

Belongs to the inorganic carbon transporter (TC 9.A.2) DabA family. As to quaternary structure, forms a complex with DabB. Zn(2+) is required as a cofactor.

The protein resides in the cell inner membrane. Part of an energy-coupled inorganic carbon pump. This chain is Probable inorganic carbon transporter subunit DabA, found in Sulfurihydrogenibium azorense (strain DSM 15241 / OCM 825 / Az-Fu1).